A 623-amino-acid polypeptide reads, in one-letter code: tRNA uridine 5-carboxymethylaminomethyl modification enzyme MnmG (623 aa).

12-17 is an FAD binding site; it reads GAGHAG. 272 to 286 provides a ligand contact to NAD(+); that stretch reads GPRYCPSIEDKINRF.

Belongs to the MnmG family. Homodimer. Heterotetramer of two MnmE and two MnmG subunits. The cofactor is FAD.

The protein localises to the cytoplasm. Its function is as follows. NAD-binding protein involved in the addition of a carboxymethylaminomethyl (cmnm) group at the wobble position (U34) of certain tRNAs, forming tRNA-cmnm(5)s(2)U34. The protein is tRNA uridine 5-carboxymethylaminomethyl modification enzyme MnmG of Christiangramia forsetii (strain DSM 17595 / CGMCC 1.15422 / KT0803) (Gramella forsetii).